An 869-amino-acid polypeptide reads, in one-letter code: DNA mismatch repair protein MutS (869 aa).

Position 602 to 609 (G602 to S609) interacts with ATP.

This sequence belongs to the DNA mismatch repair MutS family.

This protein is involved in the repair of mismatches in DNA. It is possible that it carries out the mismatch recognition step. This protein has a weak ATPase activity. This is DNA mismatch repair protein MutS from Bacillus licheniformis (strain ATCC 14580 / DSM 13 / JCM 2505 / CCUG 7422 / NBRC 12200 / NCIMB 9375 / NCTC 10341 / NRRL NRS-1264 / Gibson 46).